Reading from the N-terminus, the 63-residue chain is U-reduvitoxin-Pr4a (63 aa).

The first 19 residues, 1–19 (MKIFGLFLLIATYMALAFA), serve as a signal peptide directing secretion. Disulfide bonds link Cys-24-Cys-40, Cys-31-Cys-45, and Cys-39-Cys-52.

This sequence belongs to the venom Ptu1-like knottin family. Expressed by the venom gland.

It localises to the secreted. Binds reversibly and blocks P/Q-type voltage-gated calcium channels (Cav). This chain is U-reduvitoxin-Pr4a, found in Platymeris rhadamanthus (Red spot assassin bug).